The following is a 386-amino-acid chain: MRFFLSPPHMGGNELKYIEEVFKSNYIAPLGEFVNRFEQSVKAYSKSENALALNSATAALHLALRVAGVKQDDIVLASSFTFIASVAPICYLKAKPVFIDCDETYNIDVDLLKLAIKECEKKPKALILTHLYGNAAKMDEIVEICKENEIVLIEDAAEALGSFYKNKALGTFGEFGAYSYNGNKIITTSGGGMLIGKNKEKIEKARFYSTQARENCLHYEHLDYGYNYRLSNVLGAIGVAQMEVLEQRVLKKREIYEWYKEFLGECFSFLDELENSRSNRWLSTALIDFDKNELNSCQKDINISQKNITLHPKISKLIEDLKNEQIETRPLWKAMHAQEVFKGAKAYLNGNSELFFQKGICLPSGTAMSKDDVYEISKLILKSIKA.

Substrate is bound by residues 25–28 (NYIA), Ala56, and Ser179. Lys184 carries the post-translational modification N6-(pyridoxal phosphate)lysine. Residues Asn227 and 325–328 (QIET) each bind substrate.

The protein belongs to the DegT/DnrJ/EryC1 family. Pyridoxal 5'-phosphate is required as a cofactor.

The catalysed reaction is UDP-N-acetylbacillosamine + 2-oxoglutarate = UDP-2-acetamido-2,6-dideoxy-alpha-D-xylo-hex-4-ulose + L-glutamate. The protein operates within protein modification; protein glycosylation. Functionally, aminotransferase involved in the bacillosamine biosynthesis pathway by producing UDP-4-amino-4,6-dideoxy-alpha-D-GlcNAc (UDP-2-acetamido-4-amino-2,4,6-trideoxy-alpha-D-glucopyranose), a precursor used in the production of the glycan component 2,4-diacetamido-2,4,6-trideoxy-alpha-D-glucopyranose. Required for host colonization and virulence. Involved in the N-linked protein glycosylation pathway. This chain is UDP-N-acetylbacillosamine transaminase (pglE), found in Campylobacter jejuni subsp. jejuni serotype O:2 (strain ATCC 700819 / NCTC 11168).